The following is a 188-amino-acid chain: GMP synthase [glutamine-hydrolyzing] subunit A (188 aa).

The 186-residue stretch at 3-188 folds into the Glutamine amidotransferase type-1 domain; that stretch reads KVLVVAFGGQ…FQNFVELCKR (186 aa). Cys-79 acts as the Nucleophile in catalysis. Catalysis depends on residues His-166 and Glu-168.

As to quaternary structure, heterodimer composed of a glutamine amidotransferase subunit (A) and a GMP-binding subunit (B).

The enzyme catalyses XMP + L-glutamine + ATP + H2O = GMP + L-glutamate + AMP + diphosphate + 2 H(+). Its pathway is purine metabolism; GMP biosynthesis; GMP from XMP (L-Gln route): step 1/1. In terms of biological role, catalyzes the synthesis of GMP from XMP. In Ignicoccus hospitalis (strain KIN4/I / DSM 18386 / JCM 14125), this protein is GMP synthase [glutamine-hydrolyzing] subunit A.